The primary structure comprises 465 residues: Argininosuccinate lyase (465 aa).

This sequence belongs to the lyase 1 family. Argininosuccinate lyase subfamily.

It is found in the cytoplasm. It carries out the reaction 2-(N(omega)-L-arginino)succinate = fumarate + L-arginine. Its pathway is amino-acid biosynthesis; L-arginine biosynthesis; L-arginine from L-ornithine and carbamoyl phosphate: step 3/3. The sequence is that of Argininosuccinate lyase from Variovorax paradoxus (strain S110).